The following is a 90-amino-acid chain: Long neurotoxin 1 (90 aa).

The signal sequence occupies residues 1–21 (MKTLLLTLVVVTIVCLDVGNS). Disulfide bonds link cysteine 24/cysteine 42, cysteine 35/cysteine 63, cysteine 48/cysteine 52, cysteine 67/cysteine 78, and cysteine 79/cysteine 84.

Belongs to the three-finger toxin family. Long-chain subfamily. Type II alpha-neurotoxin sub-subfamily. As to expression, expressed by the venom gland.

It localises to the secreted. In terms of biological role, binds with high affinity to muscular (alpha-1/CHRNA1) and neuronal (alpha-7/CHRNA7) nicotinic acetylcholine receptor (nAChR) and inhibits acetylcholine from binding to the receptor, thereby impairing neuromuscular and neuronal transmission. The polypeptide is Long neurotoxin 1 (Austrelaps superbus (Lowland copperhead snake)).